The sequence spans 142 residues: Large ribosomal subunit protein uL13 (142 aa).

It belongs to the universal ribosomal protein uL13 family. As to quaternary structure, part of the 50S ribosomal subunit.

Functionally, this protein is one of the early assembly proteins of the 50S ribosomal subunit, although it is not seen to bind rRNA by itself. It is important during the early stages of 50S assembly. This chain is Large ribosomal subunit protein uL13, found in Histophilus somni (strain 129Pt) (Haemophilus somnus).